An 874-amino-acid polypeptide reads, in one-letter code: DNA mismatch repair protein MutS (874 aa).

630–637 (GPNMAGKS) serves as a coordination point for ATP.

This sequence belongs to the DNA mismatch repair MutS family.

Functionally, this protein is involved in the repair of mismatches in DNA. It is possible that it carries out the mismatch recognition step. This protein has a weak ATPase activity. The chain is DNA mismatch repair protein MutS from Chlorobium phaeovibrioides (strain DSM 265 / 1930) (Prosthecochloris vibrioformis (strain DSM 265)).